The primary structure comprises 149 residues: UPF0260 protein Pput_1301 (149 aa).

Belongs to the UPF0260 family.

The chain is UPF0260 protein Pput_1301 from Pseudomonas putida (strain ATCC 700007 / DSM 6899 / JCM 31910 / BCRC 17059 / LMG 24140 / F1).